The primary structure comprises 151 residues: Nucleoside diphosphate kinase (151 aa).

ATP is bound by residues K9, F57, R86, T92, R103, and N113. Catalysis depends on H116, which acts as the Pros-phosphohistidine intermediate.

This sequence belongs to the NDK family. Homotetramer. The cofactor is Mg(2+).

It localises to the cytoplasm. It catalyses the reaction a 2'-deoxyribonucleoside 5'-diphosphate + ATP = a 2'-deoxyribonucleoside 5'-triphosphate + ADP. The catalysed reaction is a ribonucleoside 5'-diphosphate + ATP = a ribonucleoside 5'-triphosphate + ADP. In terms of biological role, major role in the synthesis of nucleoside triphosphates other than ATP. The ATP gamma phosphate is transferred to the NDP beta phosphate via a ping-pong mechanism, using a phosphorylated active-site intermediate. This is Nucleoside diphosphate kinase from Chloroflexus aurantiacus (strain ATCC 29364 / DSM 637 / Y-400-fl).